Here is a 208-residue protein sequence, read N- to C-terminus: Uracil phosphoribosyltransferase (208 aa).

5-phospho-alpha-D-ribose 1-diphosphate is bound by residues Arg78, Arg103, and 130 to 138; that span reads DPMLATGGS. Uracil contacts are provided by residues Ile193 and 198 to 200; that span reads GDA. Residue Asp199 coordinates 5-phospho-alpha-D-ribose 1-diphosphate.

Belongs to the UPRTase family. Requires Mg(2+) as cofactor.

The enzyme catalyses UMP + diphosphate = 5-phospho-alpha-D-ribose 1-diphosphate + uracil. The protein operates within pyrimidine metabolism; UMP biosynthesis via salvage pathway; UMP from uracil: step 1/1. Allosterically activated by GTP. In terms of biological role, catalyzes the conversion of uracil and 5-phospho-alpha-D-ribose 1-diphosphate (PRPP) to UMP and diphosphate. This is Uracil phosphoribosyltransferase from Glaesserella parasuis serovar 5 (strain SH0165) (Haemophilus parasuis).